The sequence spans 181 residues: Mating-type protein A1 (181 aa).

Residues 122-181 constitute a DNA-binding region (homeobox); it reads DKKKRRHIPESSKELLEKAFKVKRFPNSKERERIARECGISPLQVRVWFTNKRARSKSRA.

It belongs to the MATA1 family.

It localises to the nucleus. Mating type proteins are sequence specific DNA-binding proteins that act as master switches in yeast differentiation by controlling gene expression in a cell type-specific fashion. This chain is Mating-type protein A1 (MATA1), found in Pichia angusta (Yeast).